Here is a 660-residue protein sequence, read N- to C-terminus: Probable E3 ubiquitin ligase complex SCF subunit sconB (660 aa).

Residues 1-13 show a composition bias toward basic and acidic residues; that stretch reads MHNENSVLRDAKE. 2 disordered regions span residues 1 to 34 and 86 to 108; these read MHNE…MTPY and LGTG…RRQA. The F-box domain occupies 175-221; it reads IDFITALPPEISFKILSYLDTASLCRAAQVSRGWKCLADDDVVWHRM. WD repeat units lie at residues 340–379, 381–419, 421–457, 459–500, 542–586, 587–626, and 629–660; these read GHTN…RTLT, HTSG…STYT, HLGG…TFLL, GHSD…RTFQ, SQVS…CLRT, FFGH…CERT, and GHSG…SFKN. The disordered stretch occupies residues 521–553; it reads GHDASHEEDSNASVSGDESPSSQVSCSPTAAFF. Over residues 531–548 the composition is skewed to polar residues; the sequence is NASVSGDESPSSQVSCSP.

This sequence belongs to the WD repeat MET30/SCONB/SCON-2 family. As to quaternary structure, component of the SCF(sconB) E3 ubiquitin ligase complex.

Its pathway is protein modification; protein ubiquitination. In terms of biological role, component of the SCF(sconB) E3 ubiquitin ligase complex involved in the regulation of sulfur metabolite repression, probably by mediating the inactivation or degradation of the metR transcription factor. The chain is Probable E3 ubiquitin ligase complex SCF subunit sconB (sconB) from Talaromyces marneffei (strain ATCC 18224 / CBS 334.59 / QM 7333) (Penicillium marneffei).